The primary structure comprises 249 residues: Putative S-adenosyl-L-methionine-dependent methyltransferase Mjls_0570 (249 aa).

S-adenosyl-L-methionine is bound by residues Asp-111 and 141–142 (DL).

This sequence belongs to the UPF0677 family.

Functionally, exhibits S-adenosyl-L-methionine-dependent methyltransferase activity. The chain is Putative S-adenosyl-L-methionine-dependent methyltransferase Mjls_0570 from Mycobacterium sp. (strain JLS).